The primary structure comprises 668 residues: Acetoin catabolism regulatory protein (668 aa).

Residues 341 to 570 (LTGGDAALQL…NVLEYARAVC (230 aa)) enclose the Sigma-54 factor interaction domain. ATP contacts are provided by residues 369 to 376 (GETGSGKE) and 433 to 442 (ADGGTLFLDE). Over residues 586-606 (GPAPSAALPQPGPAQSPAAAP) the composition is skewed to low complexity. The interval 586–611 (GPAPSAALPQPGPAQSPAAAPFDPHQ) is disordered. Residues 630 to 649 (LSAVARQIGVSRMTLYRRME) constitute a DNA-binding region (H-T-H motif).

Functionally, required for sigma-54-dependent transcription of acoXABC. This chain is Acetoin catabolism regulatory protein (acoR), found in Cupriavidus necator (strain ATCC 17699 / DSM 428 / KCTC 22496 / NCIMB 10442 / H16 / Stanier 337) (Ralstonia eutropha).